The primary structure comprises 693 residues: Elongation factor G (693 aa).

The tr-type G domain occupies 8–282 (EKTRNIGIMA…AVIDYLPSPL (275 aa)). GTP contacts are provided by residues 17–24 (AHVDAGKT), 81–85 (DTPGH), and 135–138 (NKMD).

The protein belongs to the TRAFAC class translation factor GTPase superfamily. Classic translation factor GTPase family. EF-G/EF-2 subfamily.

It is found in the cytoplasm. Catalyzes the GTP-dependent ribosomal translocation step during translation elongation. During this step, the ribosome changes from the pre-translocational (PRE) to the post-translocational (POST) state as the newly formed A-site-bound peptidyl-tRNA and P-site-bound deacylated tRNA move to the P and E sites, respectively. Catalyzes the coordinated movement of the two tRNA molecules, the mRNA and conformational changes in the ribosome. The sequence is that of Elongation factor G from Streptococcus pneumoniae serotype 2 (strain D39 / NCTC 7466).